Consider the following 402-residue polypeptide: Serine/threonine-protein kinase US3 homolog (402 aa).

Disordered stretches follow at residues 1 to 21 and 46 to 88; these read MSSTPEAETMECGISSSKVHD and FPDS…SPET. In terms of domain architecture, Protein kinase spans 102-386; it reads YNIVSSLPPG…AQDILMLPLF (285 aa). ATP-binding positions include 110 to 118 and K127; that span reads PGSEGYIYV. Catalysis depends on D218, which acts as the Proton acceptor.

This sequence belongs to the protein kinase superfamily. Ser/Thr protein kinase family. In terms of processing, phosphorylated by UL13 homolog; this phosphorylation regulates subsequent phosphorylation of UL31 and UL34 homologs by US3. Autophosphorylated.

The protein resides in the host cytoplasm. Its subcellular location is the host nucleus. It carries out the reaction L-seryl-[protein] + ATP = O-phospho-L-seryl-[protein] + ADP + H(+). It catalyses the reaction L-threonyl-[protein] + ATP = O-phospho-L-threonyl-[protein] + ADP + H(+). Its function is as follows. Multifunctional serine/threonine kinase that plays a role in several processes including egress of virus particles from the nucleus, modulation of the actin cytoskeleton and inhibition of apoptosis. Phosphorylates UL31 and UL34 homologs, two critical regulators of capsid budding from nucleus to endoplasmic reticulum, thereby facilitating virion egress. Modulates and redistributes host components of the nuclear envelope, including LMNA, emerin/EMD and the nuclear matrix protein MATR3. Phosphorylates envelope glycoprotein B (gB), probably to direct it to the cell surface. Promotes virus intracellular spread by restructuring host cell cytoskeleton. Blocks host apoptosis to extend cell survival and allow efficient viral replication. Promotes viral gene expression by phosphorylating host HDAC2 to reduce viral genome silencing. The protein is Serine/threonine-protein kinase US3 homolog (US1206) of Gallid herpesvirus 2 (strain GA) (GaHV-2).